We begin with the raw amino-acid sequence, 399 residues long: 1-deoxy-D-xylulose 5-phosphate reductoisomerase (399 aa).

NADPH contacts are provided by Thr-11, Gly-12, Ser-13, Ile-14, and Asn-125. Position 126 (Lys-126) interacts with 1-deoxy-D-xylulose 5-phosphate. Residue Glu-127 participates in NADPH binding. Residue Asp-151 coordinates Mn(2+). 4 residues coordinate 1-deoxy-D-xylulose 5-phosphate: Ser-152, Glu-153, Ser-186, and His-209. Glu-153 contributes to the Mn(2+) binding site. Position 215 (Gly-215) interacts with NADPH. 4 residues coordinate 1-deoxy-D-xylulose 5-phosphate: Ser-222, Asn-227, Lys-228, and Glu-231. Glu-231 contacts Mn(2+).

Belongs to the DXR family. The cofactor is Mg(2+). Requires Mn(2+) as cofactor.

It carries out the reaction 2-C-methyl-D-erythritol 4-phosphate + NADP(+) = 1-deoxy-D-xylulose 5-phosphate + NADPH + H(+). Its pathway is isoprenoid biosynthesis; isopentenyl diphosphate biosynthesis via DXP pathway; isopentenyl diphosphate from 1-deoxy-D-xylulose 5-phosphate: step 1/6. Its function is as follows. Catalyzes the NADPH-dependent rearrangement and reduction of 1-deoxy-D-xylulose-5-phosphate (DXP) to 2-C-methyl-D-erythritol 4-phosphate (MEP). This chain is 1-deoxy-D-xylulose 5-phosphate reductoisomerase, found in Acinetobacter baumannii (strain SDF).